Reading from the N-terminus, the 570-residue chain is Phosphocholine hydrolase Lem3 (570 aa).

It localises to the secreted. It is found in the host cytoplasm. It catalyses the reaction [Rab1 protein]-O-phosphocholine-L-serine + H2O = [Rab1 protein]-L-serine + phosphocholine + H(+). Its function is as follows. Virulence effector that plays a role in hijacking the host vesicular trafficking by recruiting the small guanosine triphosphatase (GTPase) Rab1 to the cytosolic face of the Legionella-containing vacuole (LCVs). Acts as a phosphocholine hydrolase by mediating the hydrolysis of phosphocholine to Ser residues of host RAB1 (RAB1A, RAB1B or RAB1C). Dephosphocholination of target proteins restores accessibility to GTPase effector LepB. Can act on both GDP-bound and GTP-bound Rab proteins. The sequence is that of Phosphocholine hydrolase Lem3 (lem3) from Legionella pneumophila subsp. pneumophila (strain Philadelphia 1 / ATCC 33152 / DSM 7513).